The sequence spans 178 residues: Mediator of RNA polymerase II transcription subunit 21 (178 aa).

The segment at 36-91 is disordered; that stretch reads DDDDVNSYSNMAANAPLPQSQQQRQQQKKQQEPQQEIEQPQQQSNPESKSISPPKE. The span at 67-85 shows a compositional bias: low complexity; sequence EPQQEIEQPQQQSNPESKS. A coiled-coil region spans residues 128–169; that stretch reads NEQMNLINELSDKLQAIEEERIQKIKEKDNLLNLLESMIKEV.

This sequence belongs to the Mediator complex subunit 21 family. As to quaternary structure, component of the Mediator complex.

It localises to the nucleus. Its function is as follows. Component of the Mediator complex, a coactivator involved in the regulated transcription of nearly all RNA polymerase II-dependent genes. Mediator functions as a bridge to convey information from gene-specific regulatory proteins to the basal RNA polymerase II transcription machinery. Mediator is recruited to promoters by direct interactions with regulatory proteins and serves as a scaffold for the assembly of a functional preinitiation complex with RNA polymerase II and the general transcription factors. The sequence is that of Mediator of RNA polymerase II transcription subunit 21 (SRB7) from Candida albicans (strain SC5314 / ATCC MYA-2876) (Yeast).